A 166-amino-acid chain; its full sequence is Small ribosomal subunit protein uS5 (166 aa).

An S5 DRBM domain is found at 11–74 (LNEKLIAVNR…EKARRNMFTI (64 aa)).

This sequence belongs to the universal ribosomal protein uS5 family. Part of the 30S ribosomal subunit. Contacts proteins S4 and S8.

Its function is as follows. With S4 and S12 plays an important role in translational accuracy. In terms of biological role, located at the back of the 30S subunit body where it stabilizes the conformation of the head with respect to the body. The protein is Small ribosomal subunit protein uS5 of Aliivibrio salmonicida (strain LFI1238) (Vibrio salmonicida (strain LFI1238)).